Here is a 716-residue protein sequence, read N- to C-terminus: Polyribonucleotide nucleotidyltransferase (716 aa).

Asp495 and Asp501 together coordinate Mg(2+). Positions 562–621 (PRLFRIQINPEQIGLVIGPGGKTIRSITEQTGAKIDIEDTGAVTISAVDADSALRAKSII) constitute a KH domain. In terms of domain architecture, S1 motif spans 631 to 699 (GDVYIGKVTR…QKGRVNLTRK (69 aa)).

It belongs to the polyribonucleotide nucleotidyltransferase family. Mg(2+) serves as cofactor.

It localises to the cytoplasm. The catalysed reaction is RNA(n+1) + phosphate = RNA(n) + a ribonucleoside 5'-diphosphate. Involved in mRNA degradation. Catalyzes the phosphorolysis of single-stranded polyribonucleotides processively in the 3'- to 5'-direction. The polypeptide is Polyribonucleotide nucleotidyltransferase (Synechococcus sp. (strain ATCC 27144 / PCC 6301 / SAUG 1402/1) (Anacystis nidulans)).